The following is a 271-amino-acid chain: Phycocyanobilin lyase subunit alpha (271 aa).

The protein belongs to the CpcE/RpcE/PecE family. CpcE and CpcF associate to form a lyase.

Required for the chromophorylation of the cpcA1 gene product. The polypeptide is Phycocyanobilin lyase subunit alpha (cpcE1) (Pseudanabaena tenuis (strain PCC 7409)).